Consider the following 284-residue polypeptide: uncharacterized protein (284 aa).

This is an uncharacterized protein from Methanothermobacter thermautotrophicus (Methanobacterium thermoformicicum).